A 274-amino-acid polypeptide reads, in one-letter code: NADPH-dependent 7-cyano-7-deazaguanine reductase (274 aa).

Position 80-82 (80-82 (VES)) interacts with substrate. 82–83 (SK) contributes to the NADPH binding site. The Thioimide intermediate role is filled by cysteine 181. The Proton donor role is filled by aspartate 188. Residue 220–221 (HE) participates in substrate binding. NADPH is bound at residue 249 to 250 (RG).

This sequence belongs to the GTP cyclohydrolase I family. QueF type 2 subfamily. As to quaternary structure, homodimer.

It is found in the cytoplasm. It catalyses the reaction 7-aminomethyl-7-carbaguanine + 2 NADP(+) = 7-cyano-7-deazaguanine + 2 NADPH + 3 H(+). The protein operates within tRNA modification; tRNA-queuosine biosynthesis. Its function is as follows. Catalyzes the NADPH-dependent reduction of 7-cyano-7-deazaguanine (preQ0) to 7-aminomethyl-7-deazaguanine (preQ1). The chain is NADPH-dependent 7-cyano-7-deazaguanine reductase from Burkholderia mallei (strain NCTC 10247).